Consider the following 233-residue polypeptide: Large ribosomal subunit protein uL1 (233 aa).

It belongs to the universal ribosomal protein uL1 family. Part of the 50S ribosomal subunit.

Its function is as follows. Binds directly to 23S rRNA. Forms the L1 stalk. Unlike the case in the Thermus thermophilus 70S ribosome, this protein is not seen to block the exit path of the E site tRNA. It is clear that the protein in the structure is flexible however, so this is probably due to its position in these crystals. In terms of biological role, protein L1 is also a translational repressor protein, it controls the translation of the L11 operon by binding to its mRNA. The sequence is that of Large ribosomal subunit protein uL1 (rplA) from Deinococcus radiodurans (strain ATCC 13939 / DSM 20539 / JCM 16871 / CCUG 27074 / LMG 4051 / NBRC 15346 / NCIMB 9279 / VKM B-1422 / R1).